The following is a 160-amino-acid chain: MTHCCSPGCQPTCCRTTCCRTTCWQPTIVTTCSSTPCCQPSCCVSSCCQPYCHPTCCQNTCCRTTCCQPTCVTSCCQPSCCSTPCYQPICCGSSCCGQTSCGSSCGQSSSCAPVYCRRTCYHPTTVCLPGCLNQSCGSSCCQPCYCPACCVSSCCQHSCC.

Repeat copies occupy residues 4–8 (CCSPG), 13–17 (CCRTT), 18–22 (CCRTT), 37–41 (CCQPS), 42–46 (CCVSS), 47–51 (CCQPY), 56–60 (CCQNT), 61–65 (CCRTT), 66–70 (CCQPT), 75–79 (CCQPS), 80–84 (CCSTP), 90–94 (CCGSS), 95–99 (CCGQT), 140–144 (CCQPC), 149–153 (CCVSS), and 154–158 (CCQHS). The tract at residues 4-158 (CCSPGCQPTC…CCVSSCCQHS (155 aa)) is 16 X 5 AA repeats of C-C-[GSVRQ]-[QTSPHN]-[TPSGYC].

This sequence belongs to the KRTAP type 9 family. As to quaternary structure, interacts with hair keratins.

Functionally, in the hair cortex, hair keratin intermediate filaments are embedded in an interfilamentous matrix, consisting of hair keratin-associated proteins (KRTAP), which are essential for the formation of a rigid and resistant hair shaft through their extensive disulfide bond cross-linking with abundant cysteine residues of hair keratins. The matrix proteins include the high-sulfur and high-glycine-tyrosine keratins. The protein is Keratin-associated protein 9-6 of Homo sapiens (Human).